The primary structure comprises 307 residues: Glutathione synthetase (307 aa).

An ATP-grasp domain is found at 120–304 (KLGALRFSRW…LADQTIERLR (185 aa)). 146–202 (AREQGDVVLKPLGGRAGLGVIRVQAEAPGLKALLELVTEQERLPVMAQRFLPDVTEG) contributes to the ATP binding site. Mg(2+) is bound by residues glutamate 275 and asparagine 277.

It belongs to the prokaryotic GSH synthase family. Mg(2+) serves as cofactor. It depends on Mn(2+) as a cofactor.

The catalysed reaction is gamma-L-glutamyl-L-cysteine + glycine + ATP = glutathione + ADP + phosphate + H(+). Its pathway is sulfur metabolism; glutathione biosynthesis; glutathione from L-cysteine and L-glutamate: step 2/2. This chain is Glutathione synthetase, found in Parasynechococcus marenigrum (strain WH8102).